The primary structure comprises 547 residues: Large cysteine-rich periplasmic protein OmcB, serovar E (547 aa).

Positions 1–22 (MNKLIRRAVTIFAVTSVASLFA) are cleaved as a signal peptide. Positions 23 to 40 (SGVLETSMAESLSTNVIS) are excised as a propeptide. A disordered region spans residues 46–83 (AKDNTSHKSKKARKNHSKETLVDRKEVAPVHESKATGP). Basic residues predominate over residues 52-61 (HKSKKARKNH). Over residues 62 to 79 (SKETLVDRKEVAPVHESK) the composition is skewed to basic and acidic residues.

Part of a disulfide cross-linked outer membrane complex (COMC) composed of the major outer membrane porin (MOMP), the small cysteine-rich protein (OmcA) and the large cysteine-rich periplasmic protein (OmcB).

It is found in the periplasm. Functionally, in elementary bodies (EBs, the infectious stage, which is able to survive outside the host cell) provides the structural integrity of the outer envelope through disulfide cross-links with the small cysteine-rich protein and the major outer membrane protein. It has been described in publications as the Sarkosyl-insoluble COMC (Chlamydia outer membrane complex), and serves as the functional equivalent of peptidoglycan. This is Large cysteine-rich periplasmic protein OmcB, serovar E (omcB) from Chlamydia trachomatis.